The chain runs to 975 residues: Ubiquitin C-terminal hydrolase 15 (975 aa).

Zn(2+) is bound by residues cysteine 88, cysteine 91, cysteine 99, cysteine 102, cysteine 108, cysteine 112, histidine 121, and cysteine 125. The segment at 88–125 adopts an MYND-type zinc-finger fold; it reads CATCHGPAKTRCSRCKSVRYCSGKCQIIHWRQGHKQTC. The disordered stretch occupies residues 301–378; that stretch reads EGPYASAAES…STKTAVSTNS (78 aa). Positions 309-322 are enriched in polar residues; sequence ESLQRSNSSGNVTG. Residues 354–369 show a composition bias toward basic and acidic residues; that stretch reads YDGHEKNPHNKNEQRS. The region spanning 441–747 is the USP domain; sequence RGLFNCGNSC…GAYMLFYMRS (307 aa). Catalysis depends on cysteine 450, which acts as the Nucleophile. Histidine 706 functions as the Proton acceptor in the catalytic mechanism. Residues 764-783 are disordered; sequence PTCSKRHSSKSSKGSKQDLN.

It belongs to the peptidase C19 family. Highly expressed in young panicles. Expressed in roots, leaf blades, leaf sheaths and stems. Expressed at low levels in brown grains.

Its subcellular location is the cytoplasm. The protein localises to the nucleus. The enzyme catalyses Thiol-dependent hydrolysis of ester, thioester, amide, peptide and isopeptide bonds formed by the C-terminal Gly of ubiquitin (a 76-residue protein attached to proteins as an intracellular targeting signal).. Recognizes and hydrolyzes the peptide bond at the C-terminal Gly of ubiquitin. Involved in the processing of poly-ubiquitin precursors as well as that of ubiquitinated proteins. Involved in the regulation of grain size. Acts as positive regulator of grain width and size by influencing cell proliferation. Functions partially antagonistically with GW2 in the regulation of grain width. Possesses deubiquitinating enzyme activity in vitro. This Oryza sativa subsp. japonica (Rice) protein is Ubiquitin C-terminal hydrolase 15.